A 782-amino-acid polypeptide reads, in one-letter code: Fibrinogen alpha chain (782 aa).

Residues 1 to 19 form the signal peptide; sequence MLSLRVACLILSLASTVWT. Residues 68–547 adopt a coiled-coil conformation; it reads GCRMKGLIDE…KRGRARTMRD (480 aa). Residues 264 to 283 are compositionally biased toward basic and acidic residues; it reads RPGKDGASRGDLPGDSRGDS. The interval 264–374 is disordered; the sequence is RPGKDGASRG…PATRKEYHTG (111 aa). Phosphoserine is present on serine 279. The span at 311–323 shows a compositional bias: gly residues; the sequence is SGSGSDGNWGSGT. Low complexity-rich tracts occupy residues 324–344 and 354–364; these read TGSDDTGTWGAGSSRPSSGSG and GEFSEFGGSSS. Serine 326 carries the post-translational modification Phosphoserine. A disulfide bond links cysteine 404 and cysteine 434. The residue at position 470 (serine 470) is a Phosphoserine. 4-hydroxyproline; by P4HA1 is present on proline 499. The span at 522–536 shows a compositional bias: basic and acidic residues; the sequence is DEAASEAHQEGDTRT. The tract at residues 522–542 is disordered; sequence DEAASEAHQEGDTRTTKRGRA. Serine 526 bears the Phosphoserine mark. A Fibrinogen C-terminal domain is found at 539–780; sequence RGRARTMRDC…AVRMKIRPLV (242 aa). Asparagine 602 carries N-linked (GlcNAc...) asparagine glycosylation. Ca(2+) contacts are provided by aspartate 707, aspartate 709, tryptophan 711, and glutamate 713. Cysteines 715 and 728 form a disulfide.

Heterohexamer; disulfide linked. Contains 2 sets of 3 non-identical chains (alpha, beta and gamma). The 2 heterotrimers are in head to head conformation with the N-termini in a small central domain. Conversion of fibrinogen to fibrin is triggered by thrombin, which cleaves fibrinopeptides A and B from alpha and beta chains, and thus exposes the N-terminal polymerization sites responsible for the formation of the soft clot. The soft clot is converted into the hard clot by factor XIIIA which catalyzes the epsilon-(gamma-glutamyl)lysine cross-linking between gamma chains (stronger) and between alpha chains (weaker) of different monomers. Post-translationally, forms F13A-mediated cross-links between a glutamine and the epsilon-amino group of a lysine residue, forming fibronectin-fibrinogen heteropolymers. In terms of processing, phosphorylated by FAM20C in the extracellular medium.

The protein localises to the secreted. Cleaved by the protease thrombin to yield monomers which, together with fibrinogen beta (FGB) and fibrinogen gamma (FGG), polymerize to form an insoluble fibrin matrix. Fibrin has a major function in hemostasis as one of the primary components of blood clots. In addition, functions during the early stages of wound repair to stabilize the lesion and guide cell migration during re-epithelialization. Was originally thought to be essential for platelet aggregation, based on in vitro studies using anticoagulated blood. However, subsequent studies have shown that it is not absolutely required for thrombus formation in vivo. Enhances expression of SELP in activated platelets via an ITGB3-dependent pathway. Maternal fibrinogen is essential for successful pregnancy. Fibrin deposition is also associated with infection, where it protects against IFNG-mediated hemorrhage. May also facilitate the immune response via both innate and T-cell mediated pathways. This Rattus norvegicus (Rat) protein is Fibrinogen alpha chain (Fga).